Reading from the N-terminus, the 219-residue chain is Histone H1.4 (219 aa).

Over residues 1-15 the composition is skewed to low complexity; sequence MSETAPAAPAAPAPA. The interval 1-41 is disordered; that stretch reads MSETAPAAPAAPAPAEKTPVKKKARKSAGAAKRKASGPPVS. An N-acetylserine modification is found at Ser-2. Position 2 is a phosphoserine (Ser-2). The residue at position 17 (Lys-17) is an N6-acetyllysine. Thr-18 is modified (phosphothreonine). Residues 20 to 35 show a composition bias toward basic residues; that stretch reads VKKKARKSAGAAKRKA. Lys-26 carries the N6-acetyllysine; alternate modification. At Lys-26 the chain carries N6-methyllysine; alternate. Residue Lys-34 is modified to N6-(beta-hydroxybutyryl)lysine; alternate. Lys-34 carries the N6-succinyllysine; alternate modification. Ser-36 is subject to Phosphoserine. Residues 36–109 enclose the H15 domain; sequence SGPPVSELIT…GASGSFKLNK (74 aa). N6-(beta-hydroxybutyryl)lysine is present on Lys-52. Arg-54 is subject to Citrulline. An N6-(beta-hydroxybutyryl)lysine mark is found at Lys-64, Lys-85, Lys-90, and Lys-106. The interval 92–219 is disordered; it reads TLVQTKGTGA…KPKKAAAKKK (128 aa). Residues 119–140 show a composition bias toward basic residues; it reads KAKKAGAAKAKKPAGAAKKPKK. Thr-146 is modified (phosphothreonine). 2 stretches are compositionally biased toward basic residues: residues 149–160 and 168–185; these read KSAKKTPKKAKK and KKAK…KKAP. Residue Ser-150 is modified to ADP-ribosylserine. Ser-187 carries the phosphoserine modification. A compositionally biased stretch (basic residues) spans 192 to 219; that stretch reads KAVKPKAAKPKTAKPKAAKPKKAAAKKK.

Belongs to the histone H1/H5 family. Post-translationally, H1 histones are progressively phosphorylated during the cell cycle, becoming maximally phosphorylated during late G2 phase and M phase, and being dephosphorylated sharply thereafter. Acetylated at Lys-26. Deacetylated at Lys-26 by SIRT1. In terms of processing, citrullination at Arg-54 (H1R54ci) by PADI4 takes place within the DNA-binding site of H1 and results in its displacement from chromatin and global chromatin decondensation, thereby promoting pluripotency and stem cell maintenance. Post-translationally, ADP-ribosylated on Ser-150 in response to DNA damage.

It localises to the nucleus. It is found in the chromosome. Functionally, histone H1 protein binds to linker DNA between nucleosomes forming the macromolecular structure known as the chromatin fiber. Histones H1 are necessary for the condensation of nucleosome chains into higher-order structured fibers. Also acts as a regulator of individual gene transcription through chromatin remodeling, nucleosome spacing and DNA methylation. This chain is Histone H1.4, found in Homo sapiens (Human).